Here is a 30-residue protein sequence, read N- to C-terminus: Protein Tat (30 aa).

The segment at 1–30 (PLPTTRGNPTGPKESKKEVESKTETDPFAW) is disordered. Residues 6–8 (RGN) carry the Cell attachment site motif. The segment covering 13–30 (KESKKEVESKTETDPFAW) has biased composition (basic and acidic residues).

Belongs to the lentiviruses Tat family. As to quaternary structure, interacts with host CCNT1. Associates with the P-TEFb complex composed at least of Tat, P-TEFb (CDK9 and CCNT1), TAR RNA, RNA Pol II. Recruits the HATs CREBBP, TAF1/TFIID, EP300, PCAF and GCN5L2. Interacts with host KAT5/Tip60; this interaction targets the latter to degradation. Interacts with the host deacetylase SIRT1. Interacts with host capping enzyme RNGTT; this interaction stimulates RNGTT. Binds to host KDR, and to the host integrins ITGAV/ITGB3 and ITGA5/ITGB1. Interacts with host KPNB1/importin beta-1 without previous binding to KPNA1/importin alpha-1. Interacts with EIF2AK2. Interacts with host nucleosome assembly protein NAP1L1; this interaction may be required for the transport of Tat within the nucleus, since the two proteins interact at the nuclear rim. Interacts with host C1QBP/SF2P32; this interaction involves lysine-acetylated Tat. Interacts with the host chemokine receptors CCR2, CCR3 and CXCR4. Interacts with host DPP4/CD26; this interaction may trigger an anti-proliferative effect. Interacts with host LDLR. Interacts with the host extracellular matrix metalloproteinase MMP1. Interacts with host PRMT6; this interaction mediates Tat's methylation. Interacts with, and is ubiquitinated by MDM2/Hdm2. Interacts with host PSMC3 and HTATIP2. Interacts with STAB1; this interaction may overcome SATB1-mediated repression of IL2 and IL2RA (interleukin) in T cells by binding to the same domain than HDAC1. Interacts (when acetylated on Lys-50 and Lys-51) with human CDK13, thereby increasing HIV-1 mRNA splicing and promoting the production of the doubly spliced HIV-1 protein Nef. In terms of processing, acetylation by EP300, CREBBP, GCN5L2/GCN5 and PCAF regulates the transactivation activity of Tat. EP300-mediated acetylation of Lys-50 promotes dissociation of Tat from the TAR RNA through the competitive binding to PCAF's bromodomain. In addition, the non-acetylated Tat's N-terminus can also interact with PCAF. PCAF-mediated acetylation of Lys-28 enhances Tat's binding to CCNT1. Lys-50 is deacetylated by SIRT1. Phosphorylated by EIF2AK2 on serine and threonine residues adjacent to the basic region important for TAR RNA binding and function. Phosphorylation of Tat by EIF2AK2 is dependent on the prior activation of EIF2AK2 by dsRNA. Post-translationally, asymmetrical arginine methylation by host PRMT6 seems to diminish the transactivation capacity of Tat and affects the interaction with host CCNT1. In terms of processing, polyubiquitination by MDM2 does not target Tat to degradation, but activates its transactivation function and fosters interaction with CCNT1 and TAR RNA.

The protein resides in the host nucleus. The protein localises to the host nucleolus. It is found in the host cytoplasm. It localises to the secreted. Its function is as follows. Transcriptional activator that increases RNA Pol II processivity, thereby increasing the level of full-length viral transcripts. Recognizes a hairpin structure at the 5'-LTR of the nascent viral mRNAs referred to as the transactivation responsive RNA element (TAR) and recruits the cyclin T1-CDK9 complex (P-TEFb complex) that will in turn hyperphosphorylate the RNA polymerase II to allow efficient elongation. The CDK9 component of P-TEFb and other Tat-activated kinases hyperphosphorylate the C-terminus of RNA Pol II that becomes stabilized and much more processive. Other factors such as HTATSF1/Tat-SF1, SUPT5H/SPT5, and HTATIP2 are also important for Tat's function. Besides its effect on RNA Pol II processivity, Tat induces chromatin remodeling of proviral genes by recruiting the histone acetyltransferases (HATs) CREBBP, EP300 and PCAF to the chromatin. This also contributes to the increase in proviral transcription rate, especially when the provirus integrates in transcriptionally silent region of the host genome. To ensure maximal activation of the LTR, Tat mediates nuclear translocation of NF-kappa-B by interacting with host RELA. Through its interaction with host TBP, Tat may also modulate transcription initiation. Tat can reactivate a latently infected cell by penetrating in it and transactivating its LTR promoter. In the cytoplasm, Tat is thought to act as a translational activator of HIV-1 mRNAs. In terms of biological role, extracellular circulating Tat can be endocytosed by surrounding uninfected cells via the binding to several surface receptors such as CD26, CXCR4, heparan sulfate proteoglycans (HSPG) or LDLR. Neurons are rarely infected, but they internalize Tat via their LDLR. Endosomal low pH allows Tat to cross the endosome membrane to enter the cytosol and eventually further translocate into the nucleus, thereby inducing severe cell dysfunctions ranging from cell activation to cell death. Through its interaction with nuclear HATs, Tat is potentially able to control the acetylation-dependent cellular gene expression. Tat seems to inhibit the HAT activity of KAT5/Tip60 and TAF1, and consequently modify the expression of specific cellular genes. Modulates the expression of many cellular genes involved in cell survival, proliferation or in coding for cytokines (such as IL10) or cytokine receptors. May be involved in the derepression of host interleukin IL2 expression. Mediates the activation of cyclin-dependent kinases and dysregulation of microtubule network. Tat plays a role in T-cell and neurons apoptosis. Tat induced neurotoxicity and apoptosis probably contribute to neuroAIDS. Host extracellular matrix metalloproteinase MMP1 cleaves Tat and decreases Tat's mediated neurotoxicity. Circulating Tat also acts as a chemokine-like and/or growth factor-like molecule that binds to specific receptors on the surface of the cells, affecting many cellular pathways. In the vascular system, Tat binds to ITGAV/ITGB3 and ITGA5/ITGB1 integrins dimers at the surface of endothelial cells and competes with bFGF for heparin-binding sites, leading to an excess of soluble bFGF. Binds to KDR/VEGFR-2. All these Tat-mediated effects enhance angiogenesis in Kaposi's sarcoma lesions. The sequence is that of Protein Tat from Human immunodeficiency virus type 1 group M subtype A (isolate Z321) (HIV-1).